A 387-amino-acid polypeptide reads, in one-letter code: Glucose-1-phosphate adenylyltransferase (387 aa).

Alpha-D-glucose 1-phosphate-binding positions include Tyr-99, Gly-164, 179 to 180 (EK), and Ser-190.

This sequence belongs to the bacterial/plant glucose-1-phosphate adenylyltransferase family. In terms of assembly, homotetramer.

It carries out the reaction alpha-D-glucose 1-phosphate + ATP + H(+) = ADP-alpha-D-glucose + diphosphate. Its pathway is glycan biosynthesis; glycogen biosynthesis. Its function is as follows. Involved in the biosynthesis of ADP-glucose, a building block required for the elongation reactions to produce glycogen. Catalyzes the reaction between ATP and alpha-D-glucose 1-phosphate (G1P) to produce pyrophosphate and ADP-Glc. This is Glucose-1-phosphate adenylyltransferase from Geobacillus stearothermophilus (Bacillus stearothermophilus).